Consider the following 310-residue polypeptide: Mitochondrial 2-oxodicarboxylate carrier 1 (310 aa).

The next 6 membrane-spanning stretches (helical) occupy residues 9–29, 78–97, 126–146, 179–199, 219–239, and 281–301; these read LPFI…LLVM, SHLY…KRAI, IYSG…FELV, GLEA…GIIF, LIAG…FDVV, and MRLA…MDFF. Solcar repeat units follow at residues 9–108, 120–204, and 213–300; these read LPFI…FQTF, MTQK…IRKL, and EKTR…VMDF.

Belongs to the mitochondrial carrier (TC 2.A.29) family.

It localises to the mitochondrion inner membrane. Transports C5-C7 oxodicarboxylates across the inner membranes of mitochondria. Can transport 2-oxoadipate, 2-oxoglutarate, adipate, glutarate, 2-oxopimelate, oxaloacetate, citrate and malate. The main physiological role is probably to supply 2-oxoadipate and 2-oxoglutarate from the mitochondrial matrix to the cytosol where they are used in the biosynthesis of lysine and glutamate, respectively, and in lysine catabolism. This is Mitochondrial 2-oxodicarboxylate carrier 1 (ODC1) from Saccharomyces cerevisiae (strain ATCC 204508 / S288c) (Baker's yeast).